We begin with the raw amino-acid sequence, 880 residues long: DNA-directed RNA polymerase subunit Rpo1N (880 aa).

Zn(2+) is bound by residues Cys-58, Cys-61, Cys-68, His-71, Cys-98, Cys-101, Cys-146, and Cys-149. Mg(2+) contacts are provided by Asp-456, Asp-458, and Asp-460. The Zn(2+) site is built by Arg-573, Cys-575, Cys-580, His-582, and Ser-584.

Belongs to the RNA polymerase beta' chain family. In terms of assembly, part of the 13-subunit RNA polymerase complex. Interacts with TFS4. As to quaternary structure, (Microbial infection) Binds viral protein RIP, which blocks global transcription. Mg(2+) serves as cofactor. It depends on Zn(2+) as a cofactor.

The protein localises to the cytoplasm. The catalysed reaction is RNA(n) + a ribonucleoside 5'-triphosphate = RNA(n+1) + diphosphate. (Microbial infection) Binds to viral protein RIP (AC Q3V4R7), which inhibits global transcription. Functionally, DNA-dependent RNA polymerase (RNAP) catalyzes the transcription of DNA into RNA using the four ribonucleoside triphosphates as substrates. Forms the clamp head domain. The sequence is that of DNA-directed RNA polymerase subunit Rpo1N from Sulfolobus acidocaldarius (strain ATCC 33909 / DSM 639 / JCM 8929 / NBRC 15157 / NCIMB 11770).